Reading from the N-terminus, the 652-residue chain is Serine/threonine-protein kinase ssp1 (652 aa).

At Y58 the chain carries Phosphotyrosine. Residue S59 is modified to Phosphoserine. The residue at position 63 (Y63) is a Phosphotyrosine. A Protein kinase domain is found at 135–409; that stretch reads YEIIKELGRG…LVEVKLHPWT (275 aa). ATP-binding positions include 141–149 and K164; that span reads LGRGMHGKV. Catalysis depends on D267, which acts as the Proton acceptor. Disordered stretches follow at residues 467-491 and 506-529; these read DSSSSVPSDSSICRPESSGNSSIGL and NESQKDRERKQVHPVEMGRNSSEK. Residues 508 to 518 are compositionally biased toward basic and acidic residues; it reads SQKDRERKQVH.

This sequence belongs to the protein kinase superfamily. Ser/Thr protein kinase family.

It is found in the cytoplasm. It catalyses the reaction L-seryl-[protein] + ATP = O-phospho-L-seryl-[protein] + ADP + H(+). It carries out the reaction L-threonyl-[protein] + ATP = O-phospho-L-threonyl-[protein] + ADP + H(+). In terms of biological role, involved in actin localization and thus in polarized cell growth. The protein is Serine/threonine-protein kinase ssp1 (ssp1) of Schizosaccharomyces pombe (strain 972 / ATCC 24843) (Fission yeast).